We begin with the raw amino-acid sequence, 62 residues long: Small acidic protein 1 (62 aa).

As to quaternary structure, interacts with the COP9 signalosome. In terms of tissue distribution, expressed in roots, flowers, siliques, stems, leaves and seeds. In flowers, detected in petals, anthers and pistils.

In terms of biological role, mediates responses to the synthetic auxin 2,4-dichlorophenoxyacetic acid (2,4-D). Not involved in the response to indole-3-acetic acid (IAA). Interacts with RUB modification-related components and may regulate the cullin-ring ubiquitin E3 ligase complex (CRL) activity. This Arabidopsis thaliana (Mouse-ear cress) protein is Small acidic protein 1 (SMAP1).